The sequence spans 204 residues: Thymidylate kinase (204 aa).

The protein belongs to the thymidylate kinase family. In terms of assembly, homodimer; the dimer arrangement is orthogonal and not antiparallel as in human enzyme.

It catalyses the reaction dTMP + ATP = dTDP + ADP. It functions in the pathway pyrimidine metabolism; dTTP biosynthesis. In terms of biological role, poxvirus TMP kinase is able to phosphorylate dTMP, dUMP and also dGMP from any purine and pyrimidine nucleoside triphosphate. The large substrate specificity is explained by the presence of a canal connecting the edge of the dimer interface to the TMP base binding pocket, canal not found in the human homolog. The protein is Thymidylate kinase (OPG178) of Cynomys gunnisoni (Gunnison's prairie dog).